The following is a 343-amino-acid chain: 3-dehydroquinate synthase (343 aa).

NAD(+) contacts are provided by residues Ser61–Lys66, Gly95–Asp99, Thr119–Thr120, Lys132, Lys141, and Phe159–Thr162. Zn(2+)-binding residues include Glu174, His231, and His248.

Belongs to the sugar phosphate cyclases superfamily. Dehydroquinate synthase family. NAD(+) serves as cofactor. Requires Co(2+) as cofactor. Zn(2+) is required as a cofactor.

It localises to the cytoplasm. It carries out the reaction 7-phospho-2-dehydro-3-deoxy-D-arabino-heptonate = 3-dehydroquinate + phosphate. It functions in the pathway metabolic intermediate biosynthesis; chorismate biosynthesis; chorismate from D-erythrose 4-phosphate and phosphoenolpyruvate: step 2/7. Catalyzes the conversion of 3-deoxy-D-arabino-heptulosonate 7-phosphate (DAHP) to dehydroquinate (DHQ). The chain is 3-dehydroquinate synthase from Helicobacter pylori (strain J99 / ATCC 700824) (Campylobacter pylori J99).